Consider the following 372-residue polypeptide: Glutamate 5-kinase (372 aa).

An ATP-binding site is contributed by Lys14. Residues Ser54, Asp141, and Asn153 each contribute to the substrate site. Residue 173 to 174 (TD) coordinates ATP. The PUA domain maps to 280 to 358 (RGTLVLDAGA…DAIESLLGYS (79 aa)).

It belongs to the glutamate 5-kinase family.

It is found in the cytoplasm. It catalyses the reaction L-glutamate + ATP = L-glutamyl 5-phosphate + ADP. The protein operates within amino-acid biosynthesis; L-proline biosynthesis; L-glutamate 5-semialdehyde from L-glutamate: step 1/2. Catalyzes the transfer of a phosphate group to glutamate to form L-glutamate 5-phosphate. This Pseudomonas putida (strain W619) protein is Glutamate 5-kinase.